A 476-amino-acid polypeptide reads, in one-letter code: Adenosylhomocysteinase (476 aa).

Substrate contacts are provided by T65, D140, and E201. 202–204 (TTT) is an NAD(+) binding site. K231 and D235 together coordinate substrate. Residues N236, 265–270 (GYGDVG), E288, N323, 344–346 (IGH), and N392 each bind NAD(+).

The protein belongs to the adenosylhomocysteinase family. NAD(+) is required as a cofactor.

It is found in the cytoplasm. The catalysed reaction is S-adenosyl-L-homocysteine + H2O = L-homocysteine + adenosine. It participates in amino-acid biosynthesis; L-homocysteine biosynthesis; L-homocysteine from S-adenosyl-L-homocysteine: step 1/1. Functionally, may play a key role in the regulation of the intracellular concentration of adenosylhomocysteine. This Bacteroides thetaiotaomicron (strain ATCC 29148 / DSM 2079 / JCM 5827 / CCUG 10774 / NCTC 10582 / VPI-5482 / E50) protein is Adenosylhomocysteinase.